Reading from the N-terminus, the 154-residue chain is Pro-corazonin (154 aa).

A signal peptide spans 1–19; it reads MLRLLLLPLFLFTLSMCMG. At Gln20 the chain carries Pyrrolidone carboxylic acid. At Asn30 the chain carries Asparagine amide. Positions 70-154 are excised as a propeptide; it reads LERCLSQLQR…SAEPNVFGKH (85 aa).

This sequence belongs to the corazonin family. Expression is restricted to 24 neurons in the larval CNS (8 in the brain and 16 in the ventral nerve cord) and 12-16 neurons in the pars lateralis of the adult brain.

The protein resides in the secreted. Cardioactive peptide. Corazonin is probably involved in the physiological regulation of the heart beat. Clock (Clk) and cycle (cyc) proteins negatively regulate Crz transcription in a cell-specific manner. This chain is Pro-corazonin (Crz), found in Drosophila erecta (Fruit fly).